Reading from the N-terminus, the 259-residue chain is MNDIWWQTTGEGNCHLVLLHGWGLNAEVWRCISQELSSHFTLHLVDLPGYGRSQGYGALTLDEMARLVASRAPECAIWLGWSLGGLVASQVALSEPSRVDALVTVASSPCFQAGADWPGIKPEVLSGFQRQLSEDFQRTVERFLALQTLGTETARQDARVLKSIVLAQPMPGADVLNGGLEILKTADLREALTAWQGPFLRLYGRLDGLVLRKVAALLDARFPDSESQVFEKAAHAPFISHPREFCDALLALKARLANR.

Positions 15–242 (HLVLLHGWGL…AAHAPFISHP (228 aa)) constitute an AB hydrolase-1 domain. Residues Trp-22, 82 to 83 (SL), and 143 to 147 (FLALQ) each bind substrate. Ser-82 acts as the Nucleophile in catalysis. Active-site residues include Asp-207 and His-235. Residue His-235 coordinates substrate.

This sequence belongs to the AB hydrolase superfamily. Carboxylesterase BioH family. Monomer.

The protein localises to the cytoplasm. It catalyses the reaction 6-carboxyhexanoyl-[ACP] methyl ester + H2O = 6-carboxyhexanoyl-[ACP] + methanol + H(+). The protein operates within cofactor biosynthesis; biotin biosynthesis. The physiological role of BioH is to remove the methyl group introduced by BioC when the pimeloyl moiety is complete. It allows to synthesize pimeloyl-ACP via the fatty acid synthetic pathway through the hydrolysis of the ester bonds of pimeloyl-ACP esters. The protein is Pimeloyl-[acyl-carrier protein] methyl ester esterase of Cronobacter sakazakii (strain ATCC BAA-894) (Enterobacter sakazakii).